The primary structure comprises 251 residues: Imidazole glycerol phosphate synthase subunit HisF (251 aa).

Active-site residues include aspartate 11 and aspartate 130.

This sequence belongs to the HisA/HisF family. Heterodimer of HisH and HisF.

The protein localises to the cytoplasm. The enzyme catalyses 5-[(5-phospho-1-deoxy-D-ribulos-1-ylimino)methylamino]-1-(5-phospho-beta-D-ribosyl)imidazole-4-carboxamide + L-glutamine = D-erythro-1-(imidazol-4-yl)glycerol 3-phosphate + 5-amino-1-(5-phospho-beta-D-ribosyl)imidazole-4-carboxamide + L-glutamate + H(+). The protein operates within amino-acid biosynthesis; L-histidine biosynthesis; L-histidine from 5-phospho-alpha-D-ribose 1-diphosphate: step 5/9. Its function is as follows. IGPS catalyzes the conversion of PRFAR and glutamine to IGP, AICAR and glutamate. The HisF subunit catalyzes the cyclization activity that produces IGP and AICAR from PRFAR using the ammonia provided by the HisH subunit. This chain is Imidazole glycerol phosphate synthase subunit HisF, found in Listeria monocytogenes serotype 4b (strain CLIP80459).